A 33-amino-acid chain; its full sequence is Maurocalcin (33 aa).

Disulfide bonds link Cys3/Cys17, Cys10/Cys21, and Cys16/Cys32. The segment at 22-24 is essential for stimulation of [3H]ryanodine binding to RYR; the sequence is KRR.

This sequence belongs to the scorpion calcin family. The non-natural D-maurocalcin (a chiral analog of maurocalcin composed of D-amino acids) completely loses the ability to stimulate [3H]ryanodine binding and calcium release. Its protease resistance, combined with its efficient cell penetration at concentrations devoid of cell toxicity, suggests that it should be an excellent vector for in vivo applications. In terms of tissue distribution, expressed by the venom gland.

The protein resides in the secreted. Functionally, this toxin stabilizes ryanodine receptor 1 (RyR1) opening in a long-lasting subconductance state (48%-60% of the full conductance state). Furthermore, it triggers calcium release from sarcoplasmic vesicles (6.6 nM are enough to induce a sharp release, and 60% of the total calcium is released after toxin (100 nM) addition) probably by acting as a cell-penetrating peptide (CPP). In addition, it has been shown to dose-dependently stimulate ryanodine binding to RyR1 (EC(50)=12.5-26.4 nM). It also augments the bell-shaped calcium-[3H]ryanodine binding curve that is maximal at about 10 uM calcium concentration. It binds a different site as ryanodine. It acts synergistically with caffeine. In vivo, intracerebroventricular injection into mice causes death. This is Maurocalcin from Scorpio palmatus (Israeli golden scorpion).